The sequence spans 176 residues: ATP-dependent protease subunit HslV (176 aa).

T2 is a catalytic residue. Na(+)-binding residues include A157, C160, and T163.

It belongs to the peptidase T1B family. HslV subfamily. In terms of assembly, a double ring-shaped homohexamer of HslV is capped on each side by a ring-shaped HslU homohexamer. The assembly of the HslU/HslV complex is dependent on binding of ATP.

It localises to the cytoplasm. The enzyme catalyses ATP-dependent cleavage of peptide bonds with broad specificity.. Its activity is regulated as follows. Allosterically activated by HslU binding. Protease subunit of a proteasome-like degradation complex believed to be a general protein degrading machinery. The sequence is that of ATP-dependent protease subunit HslV from Buchnera aphidicola subsp. Acyrthosiphon pisum (strain APS) (Acyrthosiphon pisum symbiotic bacterium).